The sequence spans 410 residues: MNTQLNNLILPIYMDYQATTPLDPRVMEAMLPYFTTKFGNPHSRSHSFGWEAENAVEEARGDIAKLIGAEAKEIIFTSGATESNNLAIKGIAKFYGNKKNHIITVVSEHKCVLDACRHLEQEGVKVTYLPIKPNGIIDLEVLKNAITDQTMLVSVMAVNNEIGVIQPLKEIGKICREKGVFFHSDIAQGFGKVPIDVNECNIDLASISGHKIYGPKGIGALYVRKKPRVRITPLINGGGQERGMRSGTLPTPLIVGLGTAANIAYNEMEKDTKHVNHLFDKFLDAINSQISEVYLNGDKDQRYKGNLNLSFAGVEGESIILAIKDLAVSSGSACTSASLEPSYVLRSMGVDEELAHTSIRFGIGRFTTEQEIDYAVKLICSKINKLRDLSPLWEMMQEGIDLKKIKWATH.

Residues Ala-80–Thr-81, Asn-160, Gln-188, and Ser-208–His-210 contribute to the pyridoxal 5'-phosphate site. The residue at position 211 (Lys-211) is an N6-(pyridoxal phosphate)lysine. Thr-248 is a pyridoxal 5'-phosphate binding site. Cys-334 functions as the Cysteine persulfide intermediate in the catalytic mechanism. Residue Cys-334 coordinates [2Fe-2S] cluster.

It belongs to the class-V pyridoxal-phosphate-dependent aminotransferase family. NifS/IscS subfamily. As to quaternary structure, homodimer. Forms a heterotetramer with IscU, interacts with other sulfur acceptors. Pyridoxal 5'-phosphate serves as cofactor.

Its subcellular location is the cytoplasm. It carries out the reaction (sulfur carrier)-H + L-cysteine = (sulfur carrier)-SH + L-alanine. The protein operates within cofactor biosynthesis; iron-sulfur cluster biosynthesis. Functionally, master enzyme that delivers sulfur to a number of partners involved in Fe-S cluster assembly, tRNA modification or cofactor biosynthesis. Catalyzes the removal of elemental sulfur atoms from cysteine to produce alanine. Functions as a sulfur delivery protein for Fe-S cluster synthesis onto IscU, an Fe-S scaffold assembly protein, as well as other S acceptor proteins. This chain is Cysteine desulfurase IscS, found in Rickettsia bellii (strain OSU 85-389).